The chain runs to 793 residues: Serine/threonine-protein kinase CLA4 (793 aa).

The segment at 8-27 (RELSESDFQDIGPAPKPPPV) is disordered. The PH domain maps to 56 to 168 (QRKKSGWVSY…WLDSIFSKCP (113 aa)). The region spanning 173-186 (VSSPTNFTHKVHVG) is the CRIB domain. 2 disordered regions span residues 243–369 (AAAQ…ESPT) and 383–476 (QKQL…RPTM). Composition is skewed to polar residues over residues 258 to 276 (TLSS…STPP), 312 to 337 (GVTT…QSGP), and 355 to 369 (LGNS…ESPT). In terms of domain architecture, Protein kinase spans 498-776 (FQMIEKAGQG…TEELLHHSFF (279 aa)). Residues 504–512 (AGQGASGSV) and Lys545 each bind ATP. Catalysis depends on Asp644, which acts as the Proton acceptor.

Belongs to the protein kinase superfamily. STE Ser/Thr protein kinase family. STE20 subfamily.

The catalysed reaction is L-seryl-[protein] + ATP = O-phospho-L-seryl-[protein] + ADP + H(+). The enzyme catalyses L-threonyl-[protein] + ATP = O-phospho-L-threonyl-[protein] + ADP + H(+). Required for hyphal maturation and for septation. The sequence is that of Serine/threonine-protein kinase CLA4 (CLA4) from Eremothecium gossypii (strain ATCC 10895 / CBS 109.51 / FGSC 9923 / NRRL Y-1056) (Yeast).